We begin with the raw amino-acid sequence, 346 residues long: 3-isopropylmalate dehydrogenase (346 aa).

76–87 (GPKWTDPNNRPE) is an NAD(+) binding site. Substrate contacts are provided by Arg-94, Arg-104, Arg-132, and Asp-217. 3 residues coordinate Mg(2+): Asp-217, Asp-241, and Asp-245. 275–287 (GSAPDIANQDIAN) lines the NAD(+) pocket.

Belongs to the isocitrate and isopropylmalate dehydrogenases family. LeuB type 1 subfamily. In terms of assembly, homodimer. Requires Mg(2+) as cofactor. The cofactor is Mn(2+).

It localises to the cytoplasm. It carries out the reaction (2R,3S)-3-isopropylmalate + NAD(+) = 4-methyl-2-oxopentanoate + CO2 + NADH. The protein operates within amino-acid biosynthesis; L-leucine biosynthesis; L-leucine from 3-methyl-2-oxobutanoate: step 3/4. Catalyzes the oxidation of 3-carboxy-2-hydroxy-4-methylpentanoate (3-isopropylmalate) to 3-carboxy-4-methyl-2-oxopentanoate. The product decarboxylates to 4-methyl-2 oxopentanoate. In Staphylococcus saprophyticus subsp. saprophyticus (strain ATCC 15305 / DSM 20229 / NCIMB 8711 / NCTC 7292 / S-41), this protein is 3-isopropylmalate dehydrogenase.